We begin with the raw amino-acid sequence, 453 residues long: Ribulose bisphosphate carboxylase large chain (453 aa).

Positions 1–2 are excised as a propeptide; it reads MS. Pro-3 bears the N-acetylproline mark. The residue at position 14 (Lys-14) is an N6,N6,N6-trimethyllysine. 2 residues coordinate substrate: Asn-123 and Thr-173. Lys-175 acts as the Proton acceptor in catalysis. Lys-177 serves as a coordination point for substrate. The Mg(2+) site is built by Lys-201, Asp-203, and Glu-204. Lys-201 is subject to N6-carboxylysine. His-294 functions as the Proton acceptor in the catalytic mechanism. Positions 295, 327, and 379 each coordinate substrate.

Belongs to the RuBisCO large chain family. Type I subfamily. As to quaternary structure, heterohexadecamer of 8 large chains and 8 small chains; disulfide-linked. The disulfide link is formed within the large subunit homodimers. Mg(2+) is required as a cofactor. In terms of processing, the disulfide bond which can form in the large chain dimeric partners within the hexadecamer appears to be associated with oxidative stress and protein turnover.

The protein localises to the plastid. It is found in the chloroplast. It carries out the reaction 2 (2R)-3-phosphoglycerate + 2 H(+) = D-ribulose 1,5-bisphosphate + CO2 + H2O. The catalysed reaction is D-ribulose 1,5-bisphosphate + O2 = 2-phosphoglycolate + (2R)-3-phosphoglycerate + 2 H(+). Functionally, ruBisCO catalyzes two reactions: the carboxylation of D-ribulose 1,5-bisphosphate, the primary event in carbon dioxide fixation, as well as the oxidative fragmentation of the pentose substrate in the photorespiration process. Both reactions occur simultaneously and in competition at the same active site. The protein is Ribulose bisphosphate carboxylase large chain of Valantia muralis (Wall valantia).